Consider the following 322-residue polypeptide: Ferrochelatase (322 aa).

Residues His194 and Glu275 each contribute to the Fe cation site.

This sequence belongs to the ferrochelatase family.

The protein localises to the cytoplasm. The catalysed reaction is heme b + 2 H(+) = protoporphyrin IX + Fe(2+). It participates in porphyrin-containing compound metabolism; protoheme biosynthesis; protoheme from protoporphyrin-IX: step 1/1. Its function is as follows. Catalyzes the ferrous insertion into protoporphyrin IX. The protein is Ferrochelatase of Proteus mirabilis (strain HI4320).